We begin with the raw amino-acid sequence, 836 residues long: General negative regulator of transcription subunit 3 (836 aa).

Coiled-coil stretches lie at residues Asn-36 to Ser-68, Arg-119 to Glu-195, and Asn-255 to Ala-292. Residues Glu-252–Ser-267 are compositionally biased toward polar residues. Disordered regions lie at residues Glu-252–Ala-284, Ala-296–Ala-391, Ala-410–Ala-471, and Asn-513–Thr-532. Positions Lys-268 to Lys-283 are enriched in basic and acidic residues. Residues Ser-303, Ser-307, and Ser-322 each carry the phosphoserine modification. Over residues Ser-341–Thr-386 the composition is skewed to polar residues. The segment covering Thr-418–Ser-446 has biased composition (low complexity). A phosphoserine mark is found at Ser-446 and Ser-450. 2 stretches are compositionally biased toward polar residues: residues Arg-447 to Asn-468 and Thr-522 to Asn-531. Lys-535 is covalently cross-linked (Glycyl lysine isopeptide (Lys-Gly) (interchain with G-Cter in ubiquitin)). The tract at residues Met-537 to Lys-583 is disordered. Residues Phe-559–Gln-578 show a composition bias toward acidic residues. 2 positions are modified to phosphoserine: Ser-565 and Ser-569. Thr-571 carries the post-translational modification Phosphothreonine. At Ser-657 the chain carries Phosphoserine. A coiled-coil region spans residues Asn-803–Gln-831.

This sequence belongs to the CNOT2/3/5 family. Forms a NOT protein complex that comprises NOT1, NOT2, NOT3, NOT4 and NOT5. Subunit of the 1.0 MDa CCR4-NOT core complex that contains CCR4, CAF1, NOT1, NOT2, NOT3, NOT4, NOT5, CAF40 and CAF130. The core complex probably is part of a less characterized 1.9 MDa CCR4-NOT complex.

It is found in the cytoplasm. The protein resides in the nucleus. Acts as a component of the CCR4-NOT core complex, which in the nucleus seems to be a general transcription factor, and in the cytoplasm the major mRNA deadenylase involved in mRNA turnover. The NOT protein subcomplex negatively regulates the basal and activated transcription of many genes. Preferentially affects TC-type TATA element-dependent transcription. Could directly or indirectly inhibit component(s) of the general transcription machinery. The polypeptide is General negative regulator of transcription subunit 3 (NOT3) (Saccharomyces cerevisiae (strain ATCC 204508 / S288c) (Baker's yeast)).